The primary structure comprises 350 residues: S-adenosylmethionine:tRNA ribosyltransferase-isomerase (350 aa).

This sequence belongs to the QueA family. Monomer.

Its subcellular location is the cytoplasm. The enzyme catalyses 7-aminomethyl-7-carbaguanosine(34) in tRNA + S-adenosyl-L-methionine = epoxyqueuosine(34) in tRNA + adenine + L-methionine + 2 H(+). Its pathway is tRNA modification; tRNA-queuosine biosynthesis. Functionally, transfers and isomerizes the ribose moiety from AdoMet to the 7-aminomethyl group of 7-deazaguanine (preQ1-tRNA) to give epoxyqueuosine (oQ-tRNA). The protein is S-adenosylmethionine:tRNA ribosyltransferase-isomerase of Aliivibrio fischeri (strain ATCC 700601 / ES114) (Vibrio fischeri).